We begin with the raw amino-acid sequence, 344 residues long: L-rhamnose-proton symporter (344 aa).

The next 10 helical transmembrane spans lie at 4 to 24, 38 to 58, 68 to 88, 101 to 121, 137 to 157, 175 to 195, 214 to 234, 259 to 279, 290 to 310, and 321 to 341; these read AITM…CFYA, WSVG…ALLL, FNLS…IGNI, MGIG…TPII, TLLG…AGQL, LLLA…MNAA, LPSY…FCFI, ILLS…YAWG, MSWM…GLVL, and VAVL…VGLG.

This sequence belongs to the L-rhamnose transporter (TC 2.A.7.6) family.

It is found in the cell inner membrane. The enzyme catalyses L-rhamnopyranose(in) + H(+)(in) = L-rhamnopyranose(out) + H(+)(out). Uptake of L-rhamnose across the cytoplasmic membrane with the concomitant transport of protons into the cell (symport system). The sequence is that of L-rhamnose-proton symporter from Salmonella gallinarum (strain 287/91 / NCTC 13346).